The sequence spans 375 residues: Growth/differentiation factor 8 (375 aa).

The first 23 residues, 1–23, serve as a signal peptide directing secretion; it reads MQKLAVYVYIYLFMQIAVDPVAL. Residues 24–266 constitute a propeptide that is removed on maturation; the sequence is DGSSQPTENA…VTDTPKRSRR (243 aa). Asparagine 71 is a glycosylation site (N-linked (GlcNAc...) asparagine). 4 cysteine pairs are disulfide-bonded: cysteine 272–cysteine 282, cysteine 281–cysteine 340, cysteine 309–cysteine 372, and cysteine 313–cysteine 374.

It belongs to the TGF-beta family. Homodimer; disulfide-linked.

It localises to the secreted. Its function is as follows. Acts specifically as a negative regulator of skeletal muscle growth. The polypeptide is Growth/differentiation factor 8 (MSTN) (Gallus gallus (Chicken)).